We begin with the raw amino-acid sequence, 209 residues long: Lipid A acyltransferase PagP (209 aa).

The first 24 residues, methionine 1 to alanine 24, serve as a signal peptide directing secretion. Active-site residues include histidine 81, aspartate 124, and serine 125.

The protein belongs to the lipid A palmitoyltransferase family. As to quaternary structure, homodimer.

The protein localises to the cell outer membrane. It carries out the reaction a lipid A + a 1,2-diacyl-sn-glycero-3-phosphocholine = a hepta-acyl lipid A + a 2-acyl-sn-glycero-3-phosphocholine. It catalyses the reaction a lipid IVA + a 1,2-diacyl-sn-glycero-3-phosphocholine = a lipid IVB + a 2-acyl-sn-glycero-3-phosphocholine. The catalysed reaction is a lipid IIA + a 1,2-diacyl-sn-glycero-3-phosphocholine = a lipid IIB + a 2-acyl-sn-glycero-3-phosphocholine. In terms of biological role, transfers a fatty acid residue from the sn-1 position of a phospholipid to the N-linked hydroxyfatty acid chain on the proximal unit of lipid A or its precursors. This chain is Lipid A acyltransferase PagP, found in Pectobacterium parmentieri (strain WPP163) (Pectobacterium wasabiae (strain WPP163)).